A 518-amino-acid chain; its full sequence is Ell-associated factor Eaf (518 aa).

2 stretches are compositionally biased toward polar residues: residues 119-128 (KTRSEMTNKP) and 163-182 (ENSTMRITSKTKVSTGSRRN). Disordered regions lie at residues 119–216 (KTRS…PAWH) and 241–518 (ALHN…DDDD). Serine 192 carries the post-translational modification Phosphoserine. Polar residues-rich tracts occupy residues 253–265 (ANISGSSTGSSVG) and 274–284 (MGKQRQASSQG). Residues 289 to 342 (QQQTQRSSPPMQQQQQQQNYGRGGANNNYAQQLHQQQQQQQQQQLQQQQQQMQQ) are compositionally biased toward low complexity. Residues 343–355 (RASFSHSNHSNSM) show a composition bias toward polar residues. The segment covering 368 to 377 (AAQSMAQAAA) has biased composition (low complexity). Acidic residues predominate over residues 397–412 (ESSDSDSGSDSDDSTE). Low complexity-rich tracts occupy residues 418–428 (HQQQQPPGQLS), 463–476 (QQQQQQHQQQQQQQ), and 500–518 (NDLLQNDLQLSSNSSDDDD).

The protein belongs to the EAF family.

The protein localises to the nucleus. Its function is as follows. Promotes transcriptional elongation by Su(Tpl)/ELL. Essential for development. This is Ell-associated factor Eaf from Drosophila mojavensis (Fruit fly).